A 408-amino-acid polypeptide reads, in one-letter code: Aminoacylase-1 (408 aa).

H76 is a binding site for Zn(2+). The active site involves D78. Residue D109 coordinates Zn(2+). E143 functions as the Proton acceptor in the catalytic mechanism. Zn(2+) contacts are provided by E144, E172, and H379.

Belongs to the peptidase M20A family. As to quaternary structure, homodimer. Zn(2+) serves as cofactor.

It localises to the cytoplasm. The catalysed reaction is an N-acyl-L-amino acid + H2O = an L-alpha-amino acid + a carboxylate. The enzyme catalyses an N-acetyl-L-cysteine-S-conjugate + H2O = an S-substituted L-cysteine + acetate. Its function is as follows. Involved in the hydrolysis of N-acylated or N-acetylated amino acids (except L-aspartate). The protein is Aminoacylase-1 (acy1) of Dictyostelium discoideum (Social amoeba).